The sequence spans 306 residues: NADH-cytochrome b5 reductase 2-B (306 aa).

The helical transmembrane segment at 12 to 32 (PLLLSSGIAVTAAAAVYFSTG) threads the bilayer. The FAD-binding FR-type domain occupies 53–157 (STWVDLPLVK…TGPIVKYEWK (105 aa)). 160 to 195 (KFDSVTLLGAGSGITPLYQLMGSILSNPEDKTKINL) lines the FAD pocket.

The protein belongs to the flavoprotein pyridine nucleotide cytochrome reductase family. Requires FAD as cofactor.

The protein resides in the mitochondrion outer membrane. It carries out the reaction 2 Fe(III)-[cytochrome b5] + NADH = 2 Fe(II)-[cytochrome b5] + NAD(+) + H(+). May mediate the reduction of outer membrane cytochrome b5. This chain is NADH-cytochrome b5 reductase 2-B (MCR1B), found in Vanderwaltozyma polyspora (strain ATCC 22028 / DSM 70294 / BCRC 21397 / CBS 2163 / NBRC 10782 / NRRL Y-8283 / UCD 57-17) (Kluyveromyces polysporus).